Here is a 71-residue protein sequence, read N- to C-terminus: Disintegrin halysin (71 aa).

The Disintegrin domain occupies 1-71 (EAGEECDCGS…ISAGCPRNPF (71 aa)). 6 cysteine pairs are disulfide-bonded: cysteine 6-cysteine 21, cysteine 8-cysteine 16, cysteine 15-cysteine 38, cysteine 29-cysteine 35, cysteine 34-cysteine 59, and cysteine 47-cysteine 66. Residues 51–53 (RGD) carry the Cell attachment site motif.

Belongs to the venom metalloproteinase (M12B) family. P-II subfamily. P-IIa sub-subfamily. In terms of assembly, monomer. As to expression, expressed by the venom gland.

Its subcellular location is the secreted. Its function is as follows. Inhibits fibrinogen interaction with platelets. Acts by binding to alpha-IIb/beta-3 (ITGA2B/ITGB3) on the platelet surface and inhibits aggregation induced by ADP, thrombin, platelet-activating factor and collagen. The protein is Disintegrin halysin of Gloydius blomhoffii (Mamushi).